A 1463-amino-acid chain; its full sequence is DNA polymerase III PolC-type (1463 aa).

The Exonuclease domain maps to 425–581; the sequence is YVVFDVETTG…YDAEATGRLL (157 aa).

It belongs to the DNA polymerase type-C family. PolC subfamily.

It localises to the cytoplasm. It carries out the reaction DNA(n) + a 2'-deoxyribonucleoside 5'-triphosphate = DNA(n+1) + diphosphate. In terms of biological role, required for replicative DNA synthesis. This DNA polymerase also exhibits 3' to 5' exonuclease activity. In Streptococcus suis (strain 98HAH33), this protein is DNA polymerase III PolC-type.